We begin with the raw amino-acid sequence, 285 residues long: MGILIALIPAIAWGSIGLISGRMGGTARQQTLGMTMGALVFGLALWAVEQPTLTSKIWLIGIVSGLFWSIGQGQQFTSMKAVGISRTTPISTGMQLVANALAGVLLFNEWHGNMYWIGSASVIVLIAGAVLTSLTDKTDPNRSASENWGVGIRALILSTIGYAGYTIVVHYGNVNAQAVVMPQAVGMLLGALIWSFKDKPWVVKATYRNIVTGLVWGIGNLFMFMAMAQIGQAVAYSLSQMGIVISTFGSIYLLGEHKTKREMVYVVIGSILVIVGGVALSLMKA.

A run of 9 helical transmembrane segments spans residues 2-21, 31-48, 55-72, 112-134, 147-169, 179-196, 209-228, 233-255, and 264-283; these read GILI…LISG, TLGM…LWAV, SKIW…SIGQ, GNMY…LTSL, NWGV…TIVV, VVMP…IWSF, NIVT…MAMA, AVAY…YLLG, and VYVV…LSLM.

Belongs to the GRP transporter (TC 2.A.7.5) family.

The protein localises to the cell membrane. In Lactiplantibacillus plantarum (strain ATCC BAA-793 / NCIMB 8826 / WCFS1) (Lactobacillus plantarum), this protein is Putative sugar uptake protein lp_2503.